Reading from the N-terminus, the 170-residue chain is Acireductone dioxygenase (170 aa).

Residues histidine 99, histidine 101, glutamate 105, and histidine 144 each contribute to the Fe(2+) site. Positions 99, 101, 105, and 144 each coordinate Ni(2+).

This sequence belongs to the acireductone dioxygenase (ARD) family. Monomer. Fe(2+) serves as cofactor. It depends on Ni(2+) as a cofactor.

It catalyses the reaction 1,2-dihydroxy-5-(methylsulfanyl)pent-1-en-3-one + O2 = 3-(methylsulfanyl)propanoate + CO + formate + 2 H(+). The enzyme catalyses 1,2-dihydroxy-5-(methylsulfanyl)pent-1-en-3-one + O2 = 4-methylsulfanyl-2-oxobutanoate + formate + 2 H(+). Its pathway is amino-acid biosynthesis; L-methionine biosynthesis via salvage pathway; L-methionine from S-methyl-5-thio-alpha-D-ribose 1-phosphate: step 5/6. Its function is as follows. Catalyzes 2 different reactions between oxygen and the acireductone 1,2-dihydroxy-3-keto-5-methylthiopentene (DHK-MTPene) depending upon the metal bound in the active site. Fe-containing acireductone dioxygenase (Fe-ARD) produces formate and 2-keto-4-methylthiobutyrate (KMTB), the alpha-ketoacid precursor of methionine in the methionine recycle pathway. Ni-containing acireductone dioxygenase (Ni-ARD) produces methylthiopropionate, carbon monoxide and formate, and does not lie on the methionine recycle pathway. The polypeptide is Acireductone dioxygenase (Bacillus thuringiensis subsp. konkukian (strain 97-27)).